Reading from the N-terminus, the 204-residue chain is Large ribosomal subunit protein eL15 (204 aa).

The tract at residues methionine 161–phenylalanine 180 is disordered. The segment covering lysine 169 to phenylalanine 180 has biased composition (basic residues).

It belongs to the eukaryotic ribosomal protein eL15 family. In terms of assembly, component of the large ribosomal subunit.

The protein resides in the cytoplasm. Component of the large ribosomal subunit. The ribosome is a large ribonucleoprotein complex responsible for the synthesis of proteins in the cell. The polypeptide is Large ribosomal subunit protein eL15 (rpl15) (Ictalurus punctatus (Channel catfish)).